Consider the following 475-residue polypeptide: Aspartyl/glutamyl-tRNA(Asn/Gln) amidotransferase subunit B (475 aa).

Belongs to the GatB/GatE family. GatB subfamily. As to quaternary structure, heterotrimer of A, B and C subunits.

The enzyme catalyses L-glutamyl-tRNA(Gln) + L-glutamine + ATP + H2O = L-glutaminyl-tRNA(Gln) + L-glutamate + ADP + phosphate + H(+). It catalyses the reaction L-aspartyl-tRNA(Asn) + L-glutamine + ATP + H2O = L-asparaginyl-tRNA(Asn) + L-glutamate + ADP + phosphate + 2 H(+). Its function is as follows. Allows the formation of correctly charged Asn-tRNA(Asn) or Gln-tRNA(Gln) through the transamidation of misacylated Asp-tRNA(Asn) or Glu-tRNA(Gln) in organisms which lack either or both of asparaginyl-tRNA or glutaminyl-tRNA synthetases. The reaction takes place in the presence of glutamine and ATP through an activated phospho-Asp-tRNA(Asn) or phospho-Glu-tRNA(Gln). The protein is Aspartyl/glutamyl-tRNA(Asn/Gln) amidotransferase subunit B of Trichlorobacter lovleyi (strain ATCC BAA-1151 / DSM 17278 / SZ) (Geobacter lovleyi).